A 593-amino-acid chain; its full sequence is Pyruvate decarboxylase 1 (593 aa).

The span at 1–19 shows a compositional bias: polar residues; it reads METETETPNGSTPCPTSAP. A disordered region spans residues 1–20; the sequence is METETETPNGSTPCPTSAPS. Positions 55 and 142 each coordinate substrate. The interval 420–502 is thiamine pyrophosphate binding; that stretch reads DSWFNCQKLR…FLINNGGYTI (83 aa). Mg(2+) contacts are provided by Asp470, Asn497, and Gly499. Position 503 (Glu503) interacts with substrate.

This sequence belongs to the TPP enzyme family. Homotetramer. It depends on a metal cation as a cofactor. The cofactor is thiamine diphosphate.

It catalyses the reaction a 2-oxocarboxylate + H(+) = an aldehyde + CO2. In Pisum sativum (Garden pea), this protein is Pyruvate decarboxylase 1 (PDC1).